We begin with the raw amino-acid sequence, 422 residues long: Protein TEX1 (422 aa).

WD repeat units follow at residues 61-100 (ITPN…FDKS), 158-197 (GSKT…SSVC), 207-246 (EDND…LEVC), 251-290 (AHTG…CELI), and 293-332 (DLNS…LLHS). Positions 388-422 (KRRKNNGGGNNHNKRTSKNTDRIGKDRPSRFNSKK) are disordered. Residues 405–416 (KNTDRIGKDRPS) show a composition bias toward basic and acidic residues.

This sequence belongs to the THOC3 family. In terms of assembly, component of the transcription/export (TREX) complex and the THO complex.

It is found in the nucleus. In terms of biological role, component of the TREX complex, which operates in coupling transcription elongation to mRNA export. The chain is Protein TEX1 (TEX1) from Saccharomyces cerevisiae (strain ATCC 204508 / S288c) (Baker's yeast).